A 149-amino-acid polypeptide reads, in one-letter code: Deoxyuridine 5'-triphosphate nucleotidohydrolase (149 aa).

Residues 68-70, asparagine 81, and 85-87 each bind substrate; these read RSG and LID.

It belongs to the dUTPase family. Mg(2+) serves as cofactor.

It carries out the reaction dUTP + H2O = dUMP + diphosphate + H(+). The protein operates within pyrimidine metabolism; dUMP biosynthesis; dUMP from dCTP (dUTP route): step 2/2. Its function is as follows. This enzyme is involved in nucleotide metabolism: it produces dUMP, the immediate precursor of thymidine nucleotides and it decreases the intracellular concentration of dUTP so that uracil cannot be incorporated into DNA. The chain is Deoxyuridine 5'-triphosphate nucleotidohydrolase from Laribacter hongkongensis (strain HLHK9).